A 107-amino-acid polypeptide reads, in one-letter code: Ribosome-associated factor Y (107 aa).

The segment at 85-107 (LNKLQHKSESRRADERLKDSFEN) is disordered.

Associates mainly with 70S ribosomes.

Functionally, during stationary phase, prevents 70S dimer formation, probably in order to regulate translation efficiency during transition between the exponential and the stationary phases. In addition, during environmental stress such as cold shock or excessive cell density at stationary phase, stabilizes the 70S ribosome against dissociation, inhibits translation initiation and increase translation accuracy. When normal growth conditions are restored, is quickly released from the ribosome. This is Ribosome-associated factor Y from Haemophilus influenzae (strain ATCC 51907 / DSM 11121 / KW20 / Rd).